We begin with the raw amino-acid sequence, 670 residues long: MSALLMLCAVLLLLGTPSRGARPWEPCTDLRPLDILAEVVPLNGATSGIRMVQVEGVRGLQFSATEPRTTSFPASRIFSSCDFFPEEFSIIVTLRVPNLPPKKNEYLLSLLAEERDTLLLGLRYSPTQLHFLFLSEDLAGAWQTRVSFWSPGLMDSRWHTLILAVSQGSFSLTTDCGLPVDIMADVSFPPTLSVRGARFFIGSRKRTKGLFTGVIRQLVLLPGSDATPQLCPSRNARLAELSIPQVLKRLTGKPDDNEVLNYPYEADMKVTLGSRPPCTKAEGAQFWFDAAQKGLYLCAGSEWVSVLAAKTKLDYVEEHQSLHTNSETLGIEVFSIPGVGLFAAAANRKARSAIYKWTDGKFVSYQNIATHQAQSWRHFTIGKKIFLAVANFGPNERGQEFSVIYKWSPRKLKFTLYQRIATHSARDWEAFEVDGEHFLVVANHREGDNHNIDSMVYRWNPSSQLFEANQSIATSGAYDWEFFTVGPYSFLVVANTFNGTSTQVHSHLYIWLVGAFQLFQSFLTFGAADWEVFHIGERIFLAVANSHSYDVQMQAQNDSYVLSSVIYELNITAQTFVKFQDIPTCSALDWEFFSVGEDHFLVVANSFDGNTFSVNSIIYRWQGYEGFVAVHKLPTFGCRDWEAFNTTAGSYLIYSSAKEPLSRVLKLRTG.

The first 20 residues, 1–20, serve as a signal peptide directing secretion; sequence MSALLMLCAVLLLLGTPSRG. Residues 59-278 enclose the Laminin G-like domain; sequence GLQFSATEPR…KVTLGSRPPC (220 aa). 7 EAR repeats span residues 314–359, 361–409, 413–461, 465–513, 515–571, 575–623, and 626–669; these read DYVE…KWTD, KFVS…KWSP, KFTL…RWNP, LFEA…IWLV, AFQL…ELNI, TFVK…RWQG, and GFVA…KLRT. A glycan (N-linked (GlcNAc...) asparagine) is linked at Asn-498.

In terms of tissue distribution, in the organ of Corti, expression at postnatal day 1 (P1) is restricted to the basal region of the stereocilia of inner and outer hair cells (at protein level). Expressed in the organ of Corti at P1 and P7, in cochlear ganglion, stria vascularis and vestibular ends at P7, and in inferior colliculus, remaining brainstem, cerebellum, brain hemispheres and retina at P1, P7 and in the adult. Also detected in adult liver, lung, kidney, intestine and testis but not in heart or skeletal muscle.

It localises to the secreted. Its subcellular location is the cell surface. It is found in the cell projection. The protein resides in the stereocilium. Its function is as follows. Plays a critical role in tooth and hair follicle morphogenesis through regulation of the Notch signaling pathway. May play a role in development or function of the auditory system. The polypeptide is Thrombospondin-type laminin G domain and EAR repeat-containing protein (Mus musculus (Mouse)).